The chain runs to 258 residues: Transcription factor TT2 (258 aa).

HTH myb-type domains follow at residues 11 to 63 (REEL…KNYL) and 64 to 118 (RPGI…RKRL). 2 consecutive DNA-binding regions (H-T-H motif) follow at residues 39 to 63 (WSTL…KNYL) and 91 to 114 (WSLI…NSNL). 47 to 54 (GLKRCGKS) lines the ATP pocket.

In terms of assembly, interacts with BHLH2/EGL3/MYC146, BHLH12/MYC1 and BHLH42/TT8. In terms of tissue distribution, expressed at a high level in immature siliques and at a lower level in flowers. Undetected in young seedlings, roots, leaves and inflorescence stems.

It localises to the nucleus. Functionally, transcription activator, when associated with BHLH2/EGL3/MYC146, BHLH12/MYC1, or BHLH42/TT8. Involved in the control of flavonoid late metabolism in developing siliques. Plays a key role in determining the tissue-specific activation of leucoanthocyanidin reductase (BANYULS). The chain is Transcription factor TT2 (TT2) from Arabidopsis thaliana (Mouse-ear cress).